The primary structure comprises 528 residues: Na(+)/H(+) antiporter NhaB (528 aa).

10 helical membrane passes run 20–39, 66–86, 97–117, 139–159, 241–261, 304–324, 349–369, 390–410, 448–468, and 476–496; these read WFKI…FYFN, PGGL…SQVL, LLLV…LFVF, AFLS…TVAV, IRMS…CFLV, AVIG…VGLI, EEAL…AVII, LVIF…VFVG, ATPN…APLI, and VWMA…AIQL.

This sequence belongs to the NhaB Na(+)/H(+) (TC 2.A.34) antiporter family.

Its subcellular location is the cell inner membrane. The enzyme catalyses 2 Na(+)(in) + 3 H(+)(out) = 2 Na(+)(out) + 3 H(+)(in). Its function is as follows. Na(+)/H(+) antiporter that extrudes sodium in exchange for external protons. The polypeptide is Na(+)/H(+) antiporter NhaB (Shewanella pealeana (strain ATCC 700345 / ANG-SQ1)).